Here is a 360-residue protein sequence, read N- to C-terminus: Peptide chain release factor 1 (360 aa).

Residue glutamine 235 is modified to N5-methylglutamine. A compositionally biased stretch (basic and acidic residues) spans 284–293 (QRRQQEESST). The interval 284 to 311 (QRRQQEESSTRRNLLGSGDRSDRIRTYN) is disordered.

This sequence belongs to the prokaryotic/mitochondrial release factor family. In terms of processing, methylated by PrmC. Methylation increases the termination efficiency of RF1.

It localises to the cytoplasm. Functionally, peptide chain release factor 1 directs the termination of translation in response to the peptide chain termination codons UAG and UAA. The polypeptide is Peptide chain release factor 1 (Sodalis glossinidius (strain morsitans)).